A 475-amino-acid chain; its full sequence is Ankyrin repeat, SAM and basic leucine zipper domain-containing protein 1 (475 aa).

Over residues 1 to 10 (MAAGRLRGLA) the composition is skewed to low complexity. The tract at residues 1–24 (MAAGRLRGLAVAGGGESSESDDDG) is disordered. Phosphoserine occurs at positions 17, 18, and 20. 6 ANK repeats span residues 45–74 (EKNE…SVDS), 78–107 (YGWT…NANF), 110–144 (DKQT…DPNV), 148–177 (RLMT…EVNT), 181–210 (SGYT…DKML), and 214–243 (DGNI…PLKG). The SAM domain maps to 272-334 (SYTAFGDLEV…KILAALKELD (63 aa)).

Interacts with DDX4, PIWIL1, RANBP9 and TDRD1.

Its subcellular location is the cytoplasm. In terms of biological role, plays a central role during spermatogenesis by repressing transposable elements and preventing their mobilization, which is essential for the germline integrity. Acts via the piRNA metabolic process, which mediates the repression of transposable elements during meiosis by forming complexes composed of piRNAs and Piwi proteins and governs the methylation and subsequent repression of transposons. Its association with pi-bodies suggests a participation in the primary piRNAs metabolic process. Required prior to the pachytene stage to facilitate the production of multiple types of piRNAs, including those associated with repeats involved in the regulation of retrotransposons. May act by mediating protein-protein interactions during germ cell maturation. The sequence is that of Ankyrin repeat, SAM and basic leucine zipper domain-containing protein 1 (ASZ1) from Carollia perspicillata (Seba's short-tailed bat).